The following is a 214-amino-acid chain: tRNA (guanine-N(7)-)-methyltransferase (214 aa).

Residues E44, E69, D96, and D118 each contribute to the S-adenosyl-L-methionine site. The active site involves D118. Residues K122, D154, and 191–194 (TEYE) each bind substrate.

Belongs to the class I-like SAM-binding methyltransferase superfamily. TrmB family.

It carries out the reaction guanosine(46) in tRNA + S-adenosyl-L-methionine = N(7)-methylguanosine(46) in tRNA + S-adenosyl-L-homocysteine. The protein operates within tRNA modification; N(7)-methylguanine-tRNA biosynthesis. Catalyzes the formation of N(7)-methylguanine at position 46 (m7G46) in tRNA. The polypeptide is tRNA (guanine-N(7)-)-methyltransferase (Listeria monocytogenes serotype 4a (strain HCC23)).